The following is a 194-amino-acid chain: Inner membrane-spanning protein YciB (194 aa).

5 helical membrane-spanning segments follow: residues 3–23 (LFIE…AGIY), 47–67 (IPAK…LTIY), 76–96 (WKVT…NTFF), 119–139 (LNLA…YIAF), and 149–169 (FKVF…ILFL).

This sequence belongs to the YciB family.

The protein resides in the cell inner membrane. Plays a role in cell envelope biogenesis, maintenance of cell envelope integrity and membrane homeostasis. The protein is Inner membrane-spanning protein YciB of Colwellia psychrerythraea (strain 34H / ATCC BAA-681) (Vibrio psychroerythus).